The sequence spans 348 residues: UPF0324 membrane protein BH02290 (348 aa).

11 consecutive transmembrane segments (helical) span residues 13–35 (AFLNDFSPGILACLIISVLAYGL), 45–67 (QAWLESLVLAILLGSITGSCFTL), 74–96 (GITFCAKTLLEIAIVLLGASISV), 106–128 (LLASIIFVIFVTLILSFTIGRLF), 135–157 (AMLVACGNAICGNSAIVAVAPVI), 167–189 (SIAFTALLGVLIILFLPFLHPFL), 196–218 (YGVLSGMVVYAVPQVLAATASVS), 223–245 (QIATVVKLVRVLMLGPLIFALSI), 257–275 (LHTLVPWFIIGFIFMMLIR), 285–307 (LIPIRFIAQLFTVISMAALGLGV), and 319–341 (VILASTCSILILGVCSLIMIQLN).

This sequence belongs to the UPF0324 family.

Its subcellular location is the cell membrane. This chain is UPF0324 membrane protein BH02290, found in Bartonella henselae (strain ATCC 49882 / DSM 28221 / CCUG 30454 / Houston 1) (Rochalimaea henselae).